A 258-amino-acid chain; its full sequence is Regulatory protein RecX (258 aa).

This sequence belongs to the RecX family.

It is found in the cytoplasm. In terms of biological role, modulates RecA activity. The polypeptide is Regulatory protein RecX (Streptococcus equi subsp. zooepidemicus (strain MGCS10565)).